A 415-amino-acid polypeptide reads, in one-letter code: Corticotropin-releasing factor receptor 1 (415 aa).

An N-terminal signal peptide occupies residues 1-24; sequence MLLAKTPCLLLVQVIAAGISFALT. Residues 25–111 are Extracellular-facing; sequence SLQDQCETLQ…CQEILKQEKK (87 aa). Cystine bridges form between cysteine 30/cysteine 54, cysteine 44/cysteine 87, and cysteine 68/cysteine 102. 4 N-linked (GlcNAc...) asparagine glycosylation sites follow: asparagine 38, asparagine 45, asparagine 78, and asparagine 90. The chain crosses the membrane as a helical span at residues 112–142; that stretch reads TKVHYHIAIVINFLGHSISLCALLVAFILFL. Residues 143–149 lie on the Cytoplasmic side of the membrane; that stretch reads RLRSIRC. Residues 150 to 174 form a helical membrane-spanning segment; sequence LRNIIHWNLITAFILRNVTWFVMQL. The Extracellular portion of the chain corresponds to 175–189; it reads TLSHEAHDSNVVWCR. Cysteine 188 and cysteine 258 form a disulfide bridge. A helical transmembrane segment spans residues 190 to 218; sequence LVTIAHNYFYVTNFFWMFGEGCYLHTAIV. The Cytoplasmic segment spans residues 219-225; the sequence is LTYSTDK. The chain crosses the membrane as a helical span at residues 226–253; it reads LRKWMFICIGWCIPFPIIVAWAIGKLYY. Residues 254-269 are Extracellular-facing; the sequence is DNEKCWFGKKAGVYTD. A helical transmembrane segment spans residues 270–295; the sequence is FIYQGPVILVLLINFIFLFNIVRILM. Topologically, residues 296 to 306 are cytoplasmic; sequence TKLRASTTSET. The helical transmembrane segment at 307 to 331 threads the bilayer; it reads IQYRKAVKATLVLLPLLGITYMLFF. The Extracellular segment spans residues 332 to 338; sequence VTPGEDE. The chain crosses the membrane as a helical span at residues 339-368; sequence ISRIVFIYFNSFLQSFQGFFVSVFYCFLNS. Over 369–415 the chain is Cytoplasmic; it reads EVRSAVRKRWHRWQDKHSIRARVARAMSIPTSPTRISFHSIKQSSAI.

This sequence belongs to the G-protein coupled receptor 2 family. Interacts (via N-terminal extracellular domain) with CRF and UCN.

It localises to the cell membrane. Its function is as follows. G-protein coupled receptor for CRH (corticotropin-releasing factor) and UCN (urocortin). Has high affinity for CRH and UCN. Ligand binding causes a conformation change that triggers signaling via guanine nucleotide-binding proteins (G proteins) and down-stream effectors, such as adenylate cyclase. Promotes the activation of adenylate cyclase, leading to increased intracellular cAMP levels. In Xenopus laevis (African clawed frog), this protein is Corticotropin-releasing factor receptor 1 (crhr1).